Reading from the N-terminus, the 185-residue chain is Iodate reductase subunit IdrB (185 aa).

Positions 1–46 (MTTHPIHLHHDDPAHGGERACMSRRSFLLAGGAMVTLASLPGTAVA) form a signal peptide, tat-type signal. Residues 69 to 168 (GEPLEFAYPY…LEVRGDDIYA (100 aa)) form the Rieske domain. The [2Fe-2S] cluster site is built by C109, H111, C130, and H133.

This sequence belongs to the AOX family. In terms of assembly, the iodate reductase (Idr) complex is composed of a molybdopterin-dependent iodate reductase (IdrA and IdrB subunits) and two associated peroxidases (IdrP1 and IdrP2). [2Fe-2S] cluster serves as cofactor. Post-translationally, predicted to be exported by the Tat system. The position of the signal peptide cleavage has not been experimentally proven.

Its subcellular location is the periplasm. In terms of biological role, involved in iodate respiration. May accept electrons from cytochrome c551, and catalyze the reduction of iodate (IO(3)(-)) to produce the chemically unstable intermediate hypoiodous acid (HIO). This intermediate then undergoes abiotic disproportionation to yield two molecules of iodide (I(-)) and one molecule of iodate. The resultant iodate subsequently cycles back into the reductive pathway. The initial reduction of iodate may inadvertently produce low levels of incidental toxic H(2)O(2), which is detoxified by IdrP1 and IdrP2. The sequence is that of Iodate reductase subunit IdrB from Denitromonas iodatirespirans.